We begin with the raw amino-acid sequence, 387 residues long: Paralemmin-1 (387 aa).

Position 1 is an N-acetylmethionine (Met-1). A coiled-coil region spans residues 9–101 (TSQQERLQAI…EKEIEVLERG (93 aa)). 2 stretches are compositionally biased toward basic and acidic residues: residues 31–41 (KRRQLEDERRQ) and 69–102 (DLRR…ERGD). Residues 31-160 (KRRQLEDERR…VSNTPLRTVD (130 aa)) are disordered. Residues 104 to 117 (APATAKENAAAPSP) are compositionally biased toward low complexity. Ser-116 and Ser-124 each carry phosphoserine. A phosphothreonine mark is found at Thr-141 and Thr-145. Ser-162 is modified (phosphoserine). Thr-243 is subject to Phosphothreonine. Ser-245 bears the Phosphoserine mark. 2 disordered regions span residues 247 to 296 (AGST…GQEP) and 335 to 378 (AEPK…DMKK). Residues 286–296 (GPPGIQPGQEP) are compositionally biased toward low complexity. Phosphoserine is present on Ser-346. Phosphothreonine is present on Thr-367. Ser-369 carries the phosphoserine modification. 2 S-palmitoyl cysteine lipidation sites follow: Cys-381 and Cys-383. A Cysteine methyl ester modification is found at Cys-384. Cys-384 carries S-farnesyl cysteine lipidation. The propeptide at 385–387 (SIM) is removed in mature form.

Belongs to the paralemmin family. Interacts with dopamine receptor DRD3. As to expression, widely expressed with highest expression in brain and testis and intermediate expression in heart and adrenal gland.

The protein localises to the cell membrane. The protein resides in the cell projection. It localises to the filopodium membrane. Its subcellular location is the axon. It is found in the dendrite. The protein localises to the dendritic spine. The protein resides in the basolateral cell membrane. It localises to the apicolateral cell membrane. Its function is as follows. Involved in plasma membrane dynamics and cell process formation. Isoform 1 and isoform 2 are necessary for axonal and dendritic filopodia induction, for dendritic spine maturation and synapse formation in a palmitoylation-dependent manner. This Homo sapiens (Human) protein is Paralemmin-1 (PALM).